We begin with the raw amino-acid sequence, 138 residues long: Basic phospholipase A2 BP-III (138 aa).

The signal sequence occupies residues 1-16 (MRTLWIMAVLLVGVDG). 7 disulfides stabilise this stretch: cysteine 42–cysteine 132, cysteine 44–cysteine 60, cysteine 59–cysteine 112, cysteine 65–cysteine 138, cysteine 66–cysteine 105, cysteine 73–cysteine 98, and cysteine 91–cysteine 103. Ca(2+)-binding residues include glycine 45 and glycine 47. Histidine 63 is a catalytic residue. Residue aspartate 106 is part of the active site.

This sequence belongs to the phospholipase A2 family. Group II subfamily. K49 sub-subfamily. Ca(2+) is required as a cofactor. Expressed by the venom gland.

Its subcellular location is the secreted. The catalysed reaction is a 1,2-diacyl-sn-glycero-3-phosphocholine + H2O = a 1-acyl-sn-glycero-3-phosphocholine + a fatty acid + H(+). In terms of biological role, snake venom phospholipase A2 (PLA2) that has low phospholipase A2 activity. Shows anticoagulant activities, strong myolytic activity, infiltration of polymorphonuclear cells, and edema in stromal tissues. Induces cell death of Jurkat cells in a concentration dependent manner. PLA2 catalyzes the calcium-dependent hydrolysis of the 2-acyl groups in 3-sn-phosphoglycerides. The polypeptide is Basic phospholipase A2 BP-III (Protobothrops flavoviridis (Habu)).